We begin with the raw amino-acid sequence, 463 residues long: UDP-N-acetylmuramoylalanine--D-glutamate ligase (463 aa).

Residue G126–T132 participates in ATP binding.

It belongs to the MurCDEF family.

The protein resides in the cytoplasm. The catalysed reaction is UDP-N-acetyl-alpha-D-muramoyl-L-alanine + D-glutamate + ATP = UDP-N-acetyl-alpha-D-muramoyl-L-alanyl-D-glutamate + ADP + phosphate + H(+). Its pathway is cell wall biogenesis; peptidoglycan biosynthesis. In terms of biological role, cell wall formation. Catalyzes the addition of glutamate to the nucleotide precursor UDP-N-acetylmuramoyl-L-alanine (UMA). The polypeptide is UDP-N-acetylmuramoylalanine--D-glutamate ligase (Idiomarina loihiensis (strain ATCC BAA-735 / DSM 15497 / L2-TR)).